A 208-amino-acid polypeptide reads, in one-letter code: ATP synthase subunit b (208 aa).

The span at 1–18 shows a compositional bias: polar residues; sequence MFVSTAFAQTATESQPAS. The disordered stretch occupies residues 1–26; sequence MFVSTAFAQTATESQPASTAGEHGAA. A helical transmembrane segment spans residues 56-78; that stretch reads SQVLWLAITFGLFYLFLSRVVLP.

This sequence belongs to the ATPase B chain family. F-type ATPases have 2 components, F(1) - the catalytic core - and F(0) - the membrane proton channel. F(1) has five subunits: alpha(3), beta(3), gamma(1), delta(1), epsilon(1). F(0) has three main subunits: a(1), b(2) and c(10-14). The alpha and beta chains form an alternating ring which encloses part of the gamma chain. F(1) is attached to F(0) by a central stalk formed by the gamma and epsilon chains, while a peripheral stalk is formed by the delta and b chains.

It localises to the cell inner membrane. In terms of biological role, f(1)F(0) ATP synthase produces ATP from ADP in the presence of a proton or sodium gradient. F-type ATPases consist of two structural domains, F(1) containing the extramembraneous catalytic core and F(0) containing the membrane proton channel, linked together by a central stalk and a peripheral stalk. During catalysis, ATP synthesis in the catalytic domain of F(1) is coupled via a rotary mechanism of the central stalk subunits to proton translocation. Component of the F(0) channel, it forms part of the peripheral stalk, linking F(1) to F(0). This chain is ATP synthase subunit b, found in Brucella melitensis biotype 1 (strain ATCC 23456 / CCUG 17765 / NCTC 10094 / 16M).